A 341-amino-acid chain; its full sequence is Ribosomal RNA small subunit methyltransferase H (341 aa).

S-adenosyl-L-methionine is bound by residues 47–49, aspartate 64, phenylalanine 91, aspartate 109, and glutamine 116; that span reads GGY.

The protein belongs to the methyltransferase superfamily. RsmH family.

It is found in the cytoplasm. The catalysed reaction is cytidine(1402) in 16S rRNA + S-adenosyl-L-methionine = N(4)-methylcytidine(1402) in 16S rRNA + S-adenosyl-L-homocysteine + H(+). In terms of biological role, specifically methylates the N4 position of cytidine in position 1402 (C1402) of 16S rRNA. This Rhizobium leguminosarum bv. trifolii (strain WSM1325) protein is Ribosomal RNA small subunit methyltransferase H.